The chain runs to 501 residues: IQ domain-containing protein M (501 aa).

The segment covering 237 to 247 (ERQPIKPEPKS) has biased composition (basic and acidic residues). Residues 237 to 262 (ERQPIKPEPKSQPRIKGTPNKTDKLD) form a disordered region. One can recognise an IQ domain in the interval 290–319 (LIRMVTVMQAHVRGWLERKRLQRVMTKALD).

The polypeptide is IQ domain-containing protein M (Homo sapiens (Human)).